The following is an 84-amino-acid chain: Large ribosomal subunit protein bL31B (84 aa).

The protein belongs to the bacterial ribosomal protein bL31 family. Type B subfamily. In terms of assembly, part of the 50S ribosomal subunit.

The sequence is that of Large ribosomal subunit protein bL31B from Streptomyces griseus subsp. griseus (strain JCM 4626 / CBS 651.72 / NBRC 13350 / KCC S-0626 / ISP 5235).